The sequence spans 210 residues: Thiamine-phosphate synthase (210 aa).

4-amino-2-methyl-5-(diphosphooxymethyl)pyrimidine is bound by residues 38–42 and asparagine 70; that span reads QLREK. Aspartate 71 and aspartate 90 together coordinate Mg(2+). Serine 109 is a binding site for 4-amino-2-methyl-5-(diphosphooxymethyl)pyrimidine. Position 139–141 (139–141) interacts with 2-[(2R,5Z)-2-carboxy-4-methylthiazol-5(2H)-ylidene]ethyl phosphate; sequence TPT. Lysine 142 provides a ligand contact to 4-amino-2-methyl-5-(diphosphooxymethyl)pyrimidine. 2-[(2R,5Z)-2-carboxy-4-methylthiazol-5(2H)-ylidene]ethyl phosphate is bound by residues glycine 170 and 190 to 191; that span reads VS.

Belongs to the thiamine-phosphate synthase family. Mg(2+) is required as a cofactor.

The catalysed reaction is 2-[(2R,5Z)-2-carboxy-4-methylthiazol-5(2H)-ylidene]ethyl phosphate + 4-amino-2-methyl-5-(diphosphooxymethyl)pyrimidine + 2 H(+) = thiamine phosphate + CO2 + diphosphate. It catalyses the reaction 2-(2-carboxy-4-methylthiazol-5-yl)ethyl phosphate + 4-amino-2-methyl-5-(diphosphooxymethyl)pyrimidine + 2 H(+) = thiamine phosphate + CO2 + diphosphate. It carries out the reaction 4-methyl-5-(2-phosphooxyethyl)-thiazole + 4-amino-2-methyl-5-(diphosphooxymethyl)pyrimidine + H(+) = thiamine phosphate + diphosphate. It participates in cofactor biosynthesis; thiamine diphosphate biosynthesis; thiamine phosphate from 4-amino-2-methyl-5-diphosphomethylpyrimidine and 4-methyl-5-(2-phosphoethyl)-thiazole: step 1/1. Condenses 4-methyl-5-(beta-hydroxyethyl)thiazole monophosphate (THZ-P) and 2-methyl-4-amino-5-hydroxymethyl pyrimidine pyrophosphate (HMP-PP) to form thiamine monophosphate (TMP). This is Thiamine-phosphate synthase from Leptospira biflexa serovar Patoc (strain Patoc 1 / Ames).